The following is a 165-amino-acid chain: Large ribosomal subunit protein uL15 (165 aa).

Residues 1 to 44 (MSLNQLKAPRGANRAKKRVGRGQGSGLGKTAGRGGKGQKARSGN) are disordered. Residues 21 to 37 (RGQGSGLGKTAGRGGKG) are compositionally biased toward gly residues.

Belongs to the universal ribosomal protein uL15 family. In terms of assembly, part of the 50S ribosomal subunit.

Functionally, binds to the 23S rRNA. This is Large ribosomal subunit protein uL15 from Anaeromyxobacter dehalogenans (strain 2CP-1 / ATCC BAA-258).